The chain runs to 343 residues: MNPMSWLIITTSIALSTTMITSTTHWLMTWACLEINTLSMVPLISKPNHPRATEAATKYYLIQTMASTSMLFAATTNALNTSNWETHLTTEPMATTIITLALMMKMAAAPFHSWLPSVSQGTTTLTTLTILTWQKIAPLTILLTTHNKTNITLILLSAMLSITMGGLGSLNQTQLRKLMAFSSIAHTGWIMATITMAPKISTLTFTIYIMTTIPTFLLINTTMSMTIKDLGTMWTNSPYTMTILSMTILSMGGLPPLSGFMPKWLILNNLISMNMITEATLMAMASLLSLYVYMRLTYMSSMTLSPHTTTMPLKWRTSNKKHPMGTSMLTMMTMLLLPLSPNM.

8 helical membrane passes run 1–21, 59–81, 96–116, 150–170, 178–198, 200–220, 241–261, and 270–290; these read MNPM…TMIT, YYLI…ALNT, TIIT…SWLP, NITL…LGSL, LMAF…TMAP, ISTL…LLIN, MTIL…SGFM, and LISM…LLSL.

The protein belongs to the complex I subunit 2 family.

It is found in the mitochondrion inner membrane. It catalyses the reaction a ubiquinone + NADH + 5 H(+)(in) = a ubiquinol + NAD(+) + 4 H(+)(out). Its function is as follows. Core subunit of the mitochondrial membrane respiratory chain NADH dehydrogenase (Complex I) that is believed to belong to the minimal assembly required for catalysis. Complex I functions in the transfer of electrons from NADH to the respiratory chain. The immediate electron acceptor for the enzyme is believed to be ubiquinone. The sequence is that of NADH-ubiquinone oxidoreductase chain 2 (MT-ND2) from Lycodon semicarinatus (Ryukyu odd-tooth snake).